The sequence spans 218 residues: Uracil-DNA glycosylase (218 aa).

Asp-60 (proton acceptor) is an active-site residue.

This sequence belongs to the uracil-DNA glycosylase (UDG) superfamily. UNG family.

The protein resides in the cytoplasm. The catalysed reaction is Hydrolyzes single-stranded DNA or mismatched double-stranded DNA and polynucleotides, releasing free uracil.. Excises uracil residues from the DNA which can arise as a result of misincorporation of dUMP residues by DNA polymerase or due to deamination of cytosine. The chain is Uracil-DNA glycosylase from Shewanella oneidensis (strain ATCC 700550 / JCM 31522 / CIP 106686 / LMG 19005 / NCIMB 14063 / MR-1).